The primary structure comprises 361 residues: Septin-2 (361 aa).

Y17 carries the phosphotyrosine modification. The region spanning 34–306 (KGFEFTLMVV…ENFRSERLKR (273 aa)) is the Septin-type G domain. The G1 motif stretch occupies residues 44 to 51 (GESGLGKS). Residues 44-52 (GESGLGKST), T78, G104, and 183-186 (KADT) each bind GTP. A G3 motif region spans residues 101 to 104 (DTPG). Positions 182–185 (AKAD) are G4 motif. N6-acetyllysine is present on K190. Phosphotyrosine is present on Y211. A Phosphoserine modification is found at S218. The GTP site is built by G241, R256, and Y258. The segment at 260-270 (WGVVEVENPEH) is important for dimerization.

It belongs to the TRAFAC class TrmE-Era-EngA-EngB-Septin-like GTPase superfamily. Septin GTPase family. Septins polymerize into heterooligomeric protein complexes that form filaments, and associate with cellular membranes, actin filaments and microtubules. GTPase activity is required for filament formation. Septin filaments are assembled from asymmetrical heterotrimers, composed of SEPTIN2, SEPTIN6 and SEPTIN7 that associate head-to-head to form a hexameric unit. Interaction between SEPTIN2 and SEPTIN7 seems indirect. Also interacts with SEPTIN9 and SEPTIN5. Interaction with SEPTIN4 not detected. Component of a septin core octameric complex consisting of SEPTIN12, SEPTIN7, SEPTIN6 and SEPTIN2 or SEPTIN4 in the order 12-7-6-2-2-6-7-12 or 12-7-6-4-4-6-7-12 and located in the sperm annulus. Interacts with MAP4. Interacts with DZIP1L. As to expression, widely expressed.

It is found in the cytoplasm. It localises to the cytoskeleton. The protein localises to the spindle. The protein resides in the chromosome. Its subcellular location is the centromere. It is found in the kinetochore. It localises to the cleavage furrow. The protein localises to the midbody. The protein resides in the cell cortex. Its subcellular location is the cell projection. It is found in the cilium membrane. It localises to the cilium. The protein localises to the flagellum. Functionally, filament-forming cytoskeletal GTPase. Forms a filamentous structure with SEPTIN12, SEPTIN6, SEPTIN2 and probably SEPTIN4 at the sperm annulus which is required for the structural integrity and motility of the sperm tail during postmeiotic differentiation. Required for normal organization of the actin cytoskeleton. Plays a role in the biogenesis of polarized columnar-shaped epithelium by maintaining polyglutamylated microtubules, thus facilitating efficient vesicle transport, and by impeding MAP4 binding to tubulin. Required for the progression through mitosis. Forms a scaffold at the midplane of the mitotic splindle required to maintain CENPE localization at kinetochores and consequently chromosome congression. During anaphase, may be required for chromosome segregation and spindle elongation. Plays a role in ciliogenesis and collective cell movements. In cilia, required for the integrity of the diffusion barrier at the base of the primary cilium that prevents diffusion of transmembrane proteins between the cilia and plasma membranes: probably acts by regulating the assembly of the tectonic-like complex (also named B9 complex) by localizing TMEM231 protein. In Mus musculus (Mouse), this protein is Septin-2.